A 122-amino-acid polypeptide reads, in one-letter code: Large ribosomal subunit protein uL14 (122 aa).

Belongs to the universal ribosomal protein uL14 family. Part of the 50S ribosomal subunit. Forms a cluster with proteins L3 and L19. In the 70S ribosome, L14 and L19 interact and together make contacts with the 16S rRNA in bridges B5 and B8.

Its function is as follows. Binds to 23S rRNA. Forms part of two intersubunit bridges in the 70S ribosome. The sequence is that of Large ribosomal subunit protein uL14 from Burkholderia lata (strain ATCC 17760 / DSM 23089 / LMG 22485 / NCIMB 9086 / R18194 / 383).